The following is a 94-amino-acid chain: Em protein CS41 (94 aa).

Composition is skewed to basic and acidic residues over residues 1–16 (MASG…DSLA), 33–53 (EAQE…KEQM), and 74–94 (GGER…KTKS). A disordered region spans residues 1–94 (MASGQEKGRS…IDESKFKTKS (94 aa)).

This sequence belongs to the small hydrophilic plant seed protein family.

Functionally, it is thought to provide protection for the cytoplasm during the desiccation stage of embryo development. This is Em protein CS41 (EM) from Triticum aestivum (Wheat).